A 497-amino-acid chain; its full sequence is Probable cytosol aminopeptidase (497 aa).

Mn(2+) is bound by residues K263 and D268. K275 is a catalytic residue. D286, D345, and E347 together coordinate Mn(2+). The active site involves R349.

The protein belongs to the peptidase M17 family. It depends on Mn(2+) as a cofactor.

It localises to the cytoplasm. It catalyses the reaction Release of an N-terminal amino acid, Xaa-|-Yaa-, in which Xaa is preferably Leu, but may be other amino acids including Pro although not Arg or Lys, and Yaa may be Pro. Amino acid amides and methyl esters are also readily hydrolyzed, but rates on arylamides are exceedingly low.. The catalysed reaction is Release of an N-terminal amino acid, preferentially leucine, but not glutamic or aspartic acids.. Its function is as follows. Presumably involved in the processing and regular turnover of intracellular proteins. Catalyzes the removal of unsubstituted N-terminal amino acids from various peptides. This Sinorhizobium medicae (strain WSM419) (Ensifer medicae) protein is Probable cytosol aminopeptidase.